A 145-amino-acid polypeptide reads, in one-letter code: D-aminoacyl-tRNA deacylase (145 aa).

A Gly-cisPro motif, important for rejection of L-amino acids motif is present at residues 137–138 (GP).

This sequence belongs to the DTD family. As to quaternary structure, homodimer.

The protein resides in the cytoplasm. It catalyses the reaction glycyl-tRNA(Ala) + H2O = tRNA(Ala) + glycine + H(+). It carries out the reaction a D-aminoacyl-tRNA + H2O = a tRNA + a D-alpha-amino acid + H(+). In terms of biological role, an aminoacyl-tRNA editing enzyme that deacylates mischarged D-aminoacyl-tRNAs. Also deacylates mischarged glycyl-tRNA(Ala), protecting cells against glycine mischarging by AlaRS. Acts via tRNA-based rather than protein-based catalysis; rejects L-amino acids rather than detecting D-amino acids in the active site. By recycling D-aminoacyl-tRNA to D-amino acids and free tRNA molecules, this enzyme counteracts the toxicity associated with the formation of D-aminoacyl-tRNA entities in vivo and helps enforce protein L-homochirality. The polypeptide is D-aminoacyl-tRNA deacylase (Francisella tularensis subsp. holarctica (strain LVS)).